The primary structure comprises 459 residues: ATP synthase subunit beta (459 aa).

ATP is bound at residue 149–156; it reads GGAGVGKT.

It belongs to the ATPase alpha/beta chains family. In terms of assembly, F-type ATPases have 2 components, CF(1) - the catalytic core - and CF(0) - the membrane proton channel. CF(1) has five subunits: alpha(3), beta(3), gamma(1), delta(1), epsilon(1). CF(0) has three main subunits: a(1), b(2) and c(9-12). The alpha and beta chains form an alternating ring which encloses part of the gamma chain. CF(1) is attached to CF(0) by a central stalk formed by the gamma and epsilon chains, while a peripheral stalk is formed by the delta and b chains.

It is found in the cell inner membrane. The enzyme catalyses ATP + H2O + 4 H(+)(in) = ADP + phosphate + 5 H(+)(out). Its function is as follows. Produces ATP from ADP in the presence of a proton gradient across the membrane. The catalytic sites are hosted primarily by the beta subunits. The polypeptide is ATP synthase subunit beta (Pseudomonas syringae pv. syringae (strain B728a)).